Consider the following 34-residue polypeptide: MSDIN-like toxin proprotein 7 (34 aa).

Positions 1 to 10 (MSDINATRLP) are excised as a propeptide. A cross-link (cyclopeptide (Ala-Pro)) is located at residues 11-17 (AWLTDCP). A propeptide spanning residues 18 to 34 (CVGDDVNRLLTRGESLC) is cleaved from the precursor.

This sequence belongs to the MSDIN fungal toxin family. Processed by the macrocyclase-peptidase enzyme POPB to yield a toxic cyclic heptapeptide. POPB first removes 10 residues from the N-terminus. Conformational trapping of the remaining peptide forces the enzyme to release this intermediate rather than proceed to macrocyclization. The enzyme rebinds the remaining peptide in a different conformation and catalyzes macrocyclization of the N-terminal 7 residues. Expressed in basidiocarps.

Its function is as follows. Probable toxin that belongs to the MSDIN-like toxin family responsible for a large number of food poisoning cases and deaths. This Amanita exitialis (Guangzhou destroying angel) protein is MSDIN-like toxin proprotein 7.